Here is a 252-residue protein sequence, read N- to C-terminus: MTQSPSLAAAAPIVVIPARMASTRLPGKPLADIHGVPMIVQVWRRAMEAGIGPVLVAAAEDEIAQAVRAAGGNAVLTDPDLPSGSDRVWQAVERFDPAGRHAVVVNVQGDLPTLDPGLIIRAVETVLAEPDIALSTLICEITREEERTNPNVVKAVVGLAEGQTRGRALYFSRATVPHGPGPHYHHIGLYAYRRTTLGAFVSLPPGVLERREKLEQLRALENHMRIEAALVDTVPLGVDTAEDLERARALLG.

This sequence belongs to the KdsB family.

Its subcellular location is the cytoplasm. It carries out the reaction 3-deoxy-alpha-D-manno-oct-2-ulosonate + CTP = CMP-3-deoxy-beta-D-manno-octulosonate + diphosphate. The protein operates within nucleotide-sugar biosynthesis; CMP-3-deoxy-D-manno-octulosonate biosynthesis; CMP-3-deoxy-D-manno-octulosonate from 3-deoxy-D-manno-octulosonate and CTP: step 1/1. It functions in the pathway bacterial outer membrane biogenesis; lipopolysaccharide biosynthesis. Activates KDO (a required 8-carbon sugar) for incorporation into bacterial lipopolysaccharide in Gram-negative bacteria. In Rhodospirillum rubrum (strain ATCC 11170 / ATH 1.1.1 / DSM 467 / LMG 4362 / NCIMB 8255 / S1), this protein is 3-deoxy-manno-octulosonate cytidylyltransferase.